The primary structure comprises 260 residues: Transmembrane protein 106C (260 aa).

Residue G2 is the site of N-myristoyl glycine attachment. The helical transmembrane segment at 85 to 105 (YVLLSVLLCLLASGLVFFFLF) threads the bilayer. N-linked (GlcNAc...) asparagine glycosylation occurs at N184. A helical transmembrane segment spans residues 196–216 (SYVYFYCTLPAIRVHNIVIFM).

The protein belongs to the TMEM106 family. As to quaternary structure, interacts with TMEM106B.

The protein resides in the endoplasmic reticulum membrane. It is found in the membrane. The chain is Transmembrane protein 106C (Tmem106c) from Mus musculus (Mouse).